Consider the following 284-residue polypeptide: Lipoyl synthase (284 aa).

Residues cysteine 34, cysteine 39, cysteine 45, cysteine 60, cysteine 64, cysteine 67, and serine 272 each coordinate [4Fe-4S] cluster. Positions phenylalanine 46–lysine 261 constitute a Radical SAM core domain.

The protein belongs to the radical SAM superfamily. Lipoyl synthase family. [4Fe-4S] cluster is required as a cofactor.

Its subcellular location is the cytoplasm. The catalysed reaction is [[Fe-S] cluster scaffold protein carrying a second [4Fe-4S](2+) cluster] + N(6)-octanoyl-L-lysyl-[protein] + 2 oxidized [2Fe-2S]-[ferredoxin] + 2 S-adenosyl-L-methionine + 4 H(+) = [[Fe-S] cluster scaffold protein] + N(6)-[(R)-dihydrolipoyl]-L-lysyl-[protein] + 4 Fe(3+) + 2 hydrogen sulfide + 2 5'-deoxyadenosine + 2 L-methionine + 2 reduced [2Fe-2S]-[ferredoxin]. It functions in the pathway protein modification; protein lipoylation via endogenous pathway; protein N(6)-(lipoyl)lysine from octanoyl-[acyl-carrier-protein]: step 2/2. Its function is as follows. Catalyzes the radical-mediated insertion of two sulfur atoms into the C-6 and C-8 positions of the octanoyl moiety bound to the lipoyl domains of lipoate-dependent enzymes, thereby converting the octanoylated domains into lipoylated derivatives. The protein is Lipoyl synthase of Caldanaerobacter subterraneus subsp. tengcongensis (strain DSM 15242 / JCM 11007 / NBRC 100824 / MB4) (Thermoanaerobacter tengcongensis).